A 276-amino-acid chain; its full sequence is Phosphatidylcholine synthase (276 aa).

Residues 1–30 (MGGQKEMADSVKTKLTGKLKAKKVTAPQAK) lie on the Cytoplasmic side of the membrane. A helical membrane pass occupies residues 31-51 (AFSVHLLTASGSFLAFLSVVA). The Periplasmic segment spans residues 52 to 57 (ASDGRY). Residues 58-78 (TAMWWWLGLALFVDGIDGPIA) form a helical membrane-spanning segment. The Cytoplasmic portion of the chain corresponds to 79–91 (RKLEVKYVLPNWS). The chain crosses the membrane as a helical span at residues 92-112 (GELLDSIIDYVTYVLIPAFAL). Topologically, residues 113–115 (YQS) are periplasmic. The chain crosses the membrane as a helical span at residues 116–136 (GFMGTNLSFISGAIIVVSSAI). The Cytoplasmic portion of the chain corresponds to 137 to 146 (YYADTGMKTK). A helical membrane pass occupies residues 147 to 167 (ENFFKGFPVVWNMVVFTLFIV). Residues 168–171 (RPGE) lie on the Periplasmic side of the membrane. A helical transmembrane segment spans residues 172 to 192 (WVAFGTVVASAILSFLPINFL). Residues 193–202 (HPVRVVRLRP) lie on the Cytoplasmic side of the membrane. Residues 203–223 (LNLTIFLLWCAFGVIALYYML) form a helical membrane-spanning segment. The Periplasmic portion of the chain corresponds to 224-230 (DAPLWVR). The helical transmembrane segment at 231–251 (IGISVTGLYIYFIGAIMQLFP) threads the bilayer. At 252–276 (SLGREAALAKARKLVEKQQKSGEAP) the chain is on the cytoplasmic side.

It belongs to the CDP-alcohol phosphatidyltransferase class-I family. The cofactor is Mn(2+).

It is found in the cell inner membrane. It carries out the reaction a CDP-1,2-diacyl-sn-glycerol + choline = a 1,2-diacyl-sn-glycero-3-phosphocholine + CMP + H(+). Functionally, condenses choline with CDP-diglyceride to produce phosphatidylcholine and CMP. The chain is Phosphatidylcholine synthase from Brucella melitensis biotype 1 (strain ATCC 23456 / CCUG 17765 / NCTC 10094 / 16M).